We begin with the raw amino-acid sequence, 1102 residues long: Carbamoyl phosphate synthase large chain (1102 aa).

The segment at 1–408 (MPKRTDIQSV…ALQKALRSLE (408 aa)) is carboxyphosphate synthetic domain. ATP contacts are provided by Arg-129, Arg-175, Gly-181, Gly-182, Glu-214, Ile-216, Glu-221, Gly-247, Val-248, His-249, Gln-291, and Glu-305. In terms of domain architecture, ATP-grasp 1 spans 138–334 (AVRAKIGHGE…IAKIAAKLAV (197 aa)). The Mg(2+) site is built by Gln-291, Glu-305, and Asn-307. Positions 291, 305, and 307 each coordinate Mn(2+). Residues 409–551 (KKGSQFTFVG…YFYSSYDEES (143 aa)) are oligomerization domain. The tract at residues 552–954 (EVAPREKPAV…AYAKSQAGAY (403 aa)) is carbamoyl phosphate synthetic domain. The 192-residue stretch at 682–873 (GQVLAEAGLP…LAKAAARISL (192 aa)) folds into the ATP-grasp 2 domain. ATP-binding residues include Arg-718, Arg-757, Leu-759, Glu-764, Gly-789, Ile-790, His-791, Ser-792, Gln-832, and Glu-844. Gln-832, Glu-844, and Asn-846 together coordinate Mg(2+). The Mn(2+) site is built by Gln-832, Glu-844, and Asn-846. Residues 955–1100 (GPLPTKGRAF…QEHAEHLTAA (146 aa)) enclose the MGS-like domain. The allosteric domain stretch occupies residues 955-1102 (GPLPTKGRAF…HAEHLTAARD (148 aa)).

The protein belongs to the CarB family. Composed of two chains; the small (or glutamine) chain promotes the hydrolysis of glutamine to ammonia, which is used by the large (or ammonia) chain to synthesize carbamoyl phosphate. Tetramer of heterodimers (alpha,beta)4. Requires Mg(2+) as cofactor. It depends on Mn(2+) as a cofactor.

The catalysed reaction is hydrogencarbonate + L-glutamine + 2 ATP + H2O = carbamoyl phosphate + L-glutamate + 2 ADP + phosphate + 2 H(+). It catalyses the reaction hydrogencarbonate + NH4(+) + 2 ATP = carbamoyl phosphate + 2 ADP + phosphate + 2 H(+). Its pathway is amino-acid biosynthesis; L-arginine biosynthesis; carbamoyl phosphate from bicarbonate: step 1/1. It participates in pyrimidine metabolism; UMP biosynthesis via de novo pathway; (S)-dihydroorotate from bicarbonate: step 1/3. In terms of biological role, large subunit of the glutamine-dependent carbamoyl phosphate synthetase (CPSase). CPSase catalyzes the formation of carbamoyl phosphate from the ammonia moiety of glutamine, carbonate, and phosphate donated by ATP, constituting the first step of 2 biosynthetic pathways, one leading to arginine and/or urea and the other to pyrimidine nucleotides. The large subunit (synthetase) binds the substrates ammonia (free or transferred from glutamine from the small subunit), hydrogencarbonate and ATP and carries out an ATP-coupled ligase reaction, activating hydrogencarbonate by forming carboxy phosphate which reacts with ammonia to form carbamoyl phosphate. The chain is Carbamoyl phosphate synthase large chain from Streptomyces avermitilis (strain ATCC 31267 / DSM 46492 / JCM 5070 / NBRC 14893 / NCIMB 12804 / NRRL 8165 / MA-4680).